A 206-amino-acid chain; its full sequence is Large ribosomal subunit protein uL4 (206 aa).

The interval 43 to 78 (ARSGNRAQKDREQVKHTTKKPWRQKGTGRARAGMSS) is disordered. The span at 58-70 (HTTKKPWRQKGTG) shows a compositional bias: basic residues.

Belongs to the universal ribosomal protein uL4 family. As to quaternary structure, part of the 50S ribosomal subunit.

In terms of biological role, one of the primary rRNA binding proteins, this protein initially binds near the 5'-end of the 23S rRNA. It is important during the early stages of 50S assembly. It makes multiple contacts with different domains of the 23S rRNA in the assembled 50S subunit and ribosome. Its function is as follows. Forms part of the polypeptide exit tunnel. The protein is Large ribosomal subunit protein uL4 of Polynucleobacter necessarius subsp. necessarius (strain STIR1).